The sequence spans 254 residues: Small ribosomal subunit protein uS2 (254 aa).

Residues 228 to 254 form a disordered region; it reads DRGAEKEVEAAEEAPAAEAEAAPATEE. Over residues 240–254 the composition is skewed to low complexity; sequence EAPAAEAEAAPATEE.

The protein belongs to the universal ribosomal protein uS2 family.

This chain is Small ribosomal subunit protein uS2, found in Flavobacterium johnsoniae (strain ATCC 17061 / DSM 2064 / JCM 8514 / BCRC 14874 / CCUG 350202 / NBRC 14942 / NCIMB 11054 / UW101) (Cytophaga johnsonae).